Consider the following 285-residue polypeptide: Ribonuclease H1 (285 aa).

The interval 72 to 122 is disordered; sequence RSSSSPDGSKGQESAHVQKLQVKTSKRPREPLGEEEEPPEPGAKHTRQDTE. Residues 135-281 form the RNase H type-1 domain; sequence MGESVVVYTD…ADRLAREGAK (147 aa). 4 residues coordinate Mg(2+): D144, E185, D209, and D273.

Belongs to the RNase H family. In terms of assembly, monomer. Requires Mg(2+) as cofactor.

It is found in the cytoplasm. The enzyme catalyses Endonucleolytic cleavage to 5'-phosphomonoester.. With respect to regulation, in the presence of magnesium, manganese is inhibitory. In terms of biological role, endonuclease that specifically degrades the RNA of RNA-DNA hybrids. Plays a role in RNA polymerase II (RNAp II) transcription termination by degrading R-loop RNA-DNA hybrid formation at G-rich pause sites located downstream of the poly(A) site and behind the elongating RNAp II. This chain is Ribonuclease H1 (Rnaseh1), found in Rattus norvegicus (Rat).